Reading from the N-terminus, the 995-residue chain is Putative pentatricopeptide repeat-containing protein At5g09950 (995 aa).

22 PPR repeats span residues 35–65 (DVYLCNNLINAYLETGDSVSARKVFDEMPLR), 66–100 (NCVSWACIVSGYSRNGEHKEALVFLRDMVKEGIFS), 101–137 (NQYAFVSVLRACQEIGSVGILFGRQIHGLMFKLSYAV), 138–169 (DAVVSNVLISMYWKCIGSVGYALCAFGDIEVK), 170–204 (NSVSWNSIISVYSQAGDQRSAFRIFSSMQYDGSRP), 205–241 (TEYTFGSLVTTACSLTEPDVRLLEQIMCTIQKSGLLT), 242–276 (DLFVGSGLVSAFAKSGSLSYARKVFNQMETRNAVT), 278–303 (NGLMVGLVRQKWGEEATKLFMDMNSM), 307–342 (SPESYVILLSSFPEYSLAEEVGLKKGREVHGHVITT), 348–378 (MVGIGNGLVNMYAKCGSIADARRVFYFMTDK), 379–413 (DSVSWNSMITGLDQNGCFIEAVERYKSMRRHDILP), 414–448 (GSFTLISSLSSCASLKWAKLGQQIHGESLKLGIDL), 449–483 (NVSVSNALMTLYAETGYLNECRKIFSSMPEHDQVS), 484–515 (WNSIIGALARSERSLPEAVVCFLNAQRAGQKL), 516–550 (NRITFSSVLSAVSSLSFGELGKQIHGLALKNNIAD), 551–581 (EATTENALIACYGKCGEMDGCEKIFSRMAER), 583–617 (DNVTWNSMISGYIHNELLAKALDLVWFMLQTGQRL), 618–652 (DSFMYATVLSAFASVATLERGMEVHACSVRACLES), 653–683 (DVVVGSALVDMYSKCGRLDYALRFFNTMPVR), 684–718 (NSYSWNSMISGYARHGQGEEALKLFETMKLDGQTP), 720–750 (DHVTFVGVLSACSHAGLLEEGFKHFESMSDS), and 756–786 (RIEHFSCMADVLGRAGELDKLEDFIEKMPMK). Residues 791-868 (IWRTVLGACC…EAGYSWVTMK (78 aa)) form a type E motif region. Residues 869–899 (DGVHMFVAGDKSHPDADVIYKKLKELNRKMR) are type E(+) motif. Residues 900 to 995 (DAGYVPQTGF…DGACSCSDFW (96 aa)) form a type DYW motif region.

It belongs to the PPR family. PCMP-H subfamily.

This chain is Putative pentatricopeptide repeat-containing protein At5g09950 (PCMP-H35), found in Arabidopsis thaliana (Mouse-ear cress).